A 426-amino-acid chain; its full sequence is 4-hydroxy-3-methylbut-2-en-1-yl diphosphate synthase (flavodoxin) (426 aa).

Positions 320, 323, 366, and 373 each coordinate [4Fe-4S] cluster.

Belongs to the IspG family. It depends on [4Fe-4S] cluster as a cofactor.

It carries out the reaction (2E)-4-hydroxy-3-methylbut-2-enyl diphosphate + oxidized [flavodoxin] + H2O + 2 H(+) = 2-C-methyl-D-erythritol 2,4-cyclic diphosphate + reduced [flavodoxin]. It participates in isoprenoid biosynthesis; isopentenyl diphosphate biosynthesis via DXP pathway; isopentenyl diphosphate from 1-deoxy-D-xylulose 5-phosphate: step 5/6. In terms of biological role, converts 2C-methyl-D-erythritol 2,4-cyclodiphosphate (ME-2,4cPP) into 1-hydroxy-2-methyl-2-(E)-butenyl 4-diphosphate. The polypeptide is 4-hydroxy-3-methylbut-2-en-1-yl diphosphate synthase (flavodoxin) (Wolbachia sp. subsp. Drosophila simulans (strain wRi)).